The chain runs to 122 residues: MKHVFKYLDFAEDREHAESVATKELKLDHVEKFAIRDLANDIKERGCVELVQPGGFDELVQIYEAGGDGIEPLNCGIESRKVAIAALLRVMREPDFQCLEMVHEIIRIARDLEAPVDAPLDC.

This is an uncharacterized protein from Escherichia coli (strain K12).